A 234-amino-acid polypeptide reads, in one-letter code: Triggering receptor expressed on myeloid cells 1 (234 aa).

The signal sequence occupies residues 1-20; sequence MRKTRLWGLLWMLFVSELRA. The Extracellular segment spans residues 21–205; it reads ATKLTEEKYE…TDIIRVPVFN (185 aa). An Ig-like V-type domain is found at 26–134; it reads EEKYELKEGQ…LFDRIRLVVT (109 aa). A disulfide bond links Cys-41 and Cys-113. N-linked (GlcNAc...) asparagine glycans are attached at residues Asn-146, Asn-191, and Asn-194. The helical transmembrane segment at 206-226 threads the bilayer; sequence IVILLAGGFLSKSLVFSVLFA. At 227 to 234 the chain is on the cytoplasmic side; that stretch reads VTLRSFVP.

In terms of assembly, monomer. Homomultimer; when activated. Interacts with TYROBP/DAP12. Interacts with TLR4. Post-translationally, glycosylated. Mostly expressed by immune cells of the myeloid lineage, such as monocytes, macrophages, neutrophils and dendritic cells. Expression is associated with a mature stage of myeloid development. Highly expressed in adult liver, lung and spleen than in corresponding fetal tissue. Also expressed in the lymph node, placenta, spinal cord and heart tissues. Isoform 2 was detected in the lung, liver and mature monocytes.

The protein localises to the cell membrane. It is found in the secreted. Cell surface receptor that plays important roles in innate and adaptive immunity by amplifying inflammatory responses. Upon activation by various ligands such as PGLYRP1, HMGB1 or HSP70, multimerizes and forms a complex with transmembrane adapter TYROBP/DAP12. In turn, initiates a SYK-mediated cascade of tyrosine phosphorylation, activating multiple downstream mediators such as BTK, MAPK1, MAPK3 or phospholipase C-gamma. This cascade promotes the neutrophil- and macrophage-mediated release of pro-inflammatory cytokines and/or chemokines, as well as their migration and thereby amplifies inflammatory responses that are triggered by bacterial and fungal infections. By also promoting the amplification of inflammatory signals that are initially triggered by Toll-like receptor (TLR) and NOD-like receptor engagement, plays a major role in the pathophysiology of acute and chronic inflammatory diseases of different etiologies including septic shock and atherosclerosis. Its function is as follows. Acts as a decoy receptor, counterbalancing TREM1 pro-inflammatory activity through the neutralization of its ligand. The polypeptide is Triggering receptor expressed on myeloid cells 1 (TREM1) (Homo sapiens (Human)).